A 410-amino-acid polypeptide reads, in one-letter code: Phytoene synthase 1, chloroplastic (410 aa).

Residues 1 to 62 (MAIILVRAAS…EAGRPSPAVY (62 aa)) constitute a chloroplast transit peptide.

This sequence belongs to the phytoene/squalene synthase family. As to quaternary structure, monomer. As to expression, expressed in embryos, endosperm and seedling leaves. Expressed in leaves and endosperm.

The protein localises to the plastid. The protein resides in the chloroplast stroma. It carries out the reaction 2 (2E,6E,10E)-geranylgeranyl diphosphate = 15-cis-phytoene + 2 diphosphate. Its pathway is carotenoid biosynthesis; phytoene biosynthesis; all-trans-phytoene from geranylgeranyl diphosphate: step 1/1. In terms of biological role, catalyzes the conversion of geranylgeranyl diphosphate to phytoene. Mediates the first committed step in carotenoid biosynthesis. This is Phytoene synthase 1, chloroplastic from Zea mays (Maize).